Here is a 606-residue protein sequence, read N- to C-terminus: Endo-beta-1,4-xylanase Xyn10C (606 aa).

The first 19 residues, 1 to 19, serve as a signal peptide directing secretion; it reads MKKIQQLLMLSLISSTLIA. The N-palmitoyl cysteine moiety is linked to residue Cys20. Residue Cys20 is the site of S-diacylglycerol cysteine attachment. The interval 23–64 is disordered; sequence GGGGGSTPTTSSSPQSSSPASTPSSASSSSIISSSSLSSSLS. Low complexity predominate over residues 29–64; the sequence is TPTTSSSPQSSSPASTPSSASSSSIISSSSLSSSLS. Positions 91 to 242 constitute a CBM15 domain; sequence GNVVIEVDMA…KSVTITLAQE (152 aa). 2 residues coordinate a carbohydrate: Asn106 and Gln171. Cys183 and Cys200 form a disulfide bridge. A carbohydrate is bound at residue Gln217. The 352-residue stretch at 245 to 596 folds into the GH10 domain; the sequence is SANVDHLRDL…KPALRGFADA (352 aa). Residues 296–299, His332, and Asn384 contribute to the substrate site; that span reads NIMK. Glu385 (proton donor) is an active-site residue. The Nucleophile role is filled by Glu497. Trp552 contributes to the substrate binding site.

This sequence belongs to the glycosyl hydrolase 10 (cellulase F) family.

It localises to the cell outer membrane. It carries out the reaction Endohydrolysis of (1-&gt;4)-beta-D-xylosidic linkages in xylans.. It functions in the pathway glycan degradation; xylan degradation. Endo-acting xylanase which specifically cleaves internal linkages on the xylan backbone, releasing xylooligosaccharides. Is able to hydrolyze oat spelt xylan, the arabinoxylans from wheat and rye, and glucuronoxylan. Also displays very low activity against xylooligosaccharides. During the xylan degradation process, Xyn10C may act on the soluble xylans and long xylooligosaccharides products released by the secreted xylanases Xyn11A, Xyn11B and Xyn10A. This Cellvibrio japonicus (Pseudomonas fluorescens subsp. cellulosa) protein is Endo-beta-1,4-xylanase Xyn10C (xyn10C).